Here is a 499-residue protein sequence, read N- to C-terminus: Putative DBH-like monooxygenase protein 2 (499 aa).

An N-terminal signal peptide occupies residues 1–16 (MAHDLLFRLFPLLALG). In terms of domain architecture, DOMON spans 40–156 (NVIFLRWDFD…NTVRVLAAYG (117 aa)). The active site involves Tyr-209. Intrachain disulfides connect Cys-211–Cys-261 and Cys-248–Cys-271. The N-linked (GlcNAc...) asparagine glycan is linked to Asn-236. His-241 and His-242 together coordinate Cu cation. N-linked (GlcNAc...) asparagine glycosylation is present at Asn-250. His-308, His-389, and His-391 together coordinate Cu cation. Intrachain disulfides connect Cys-365–Cys-480 and Cys-443–Cys-465. His-389 is a catalytic residue. Residue Asn-404 is glycosylated (N-linked (GlcNAc...) asparagine). Position 464 (Met-464) interacts with Cu cation. The N-linked (GlcNAc...) asparagine glycan is linked to Asn-476.

Belongs to the copper type II ascorbate-dependent monooxygenase family. The cofactor is Cu(2+).

This Homo sapiens (Human) protein is Putative DBH-like monooxygenase protein 2 (MOXD2P).